The chain runs to 477 residues: Phosphatidylinositol 4-kinase type 2-beta (477 aa).

Residues 1 to 80 (MPEPPRDIMA…EDRSISASLS (80 aa)) form a disordered region. Ser45 is subject to Phosphoserine. In terms of domain architecture, PI3K/PI4K catalytic spans 116–447 (GVFPERISQG…AQMPCVIVEC (332 aa)). The tract at residues 122 to 128 (ISQGSSG) is G-loop. Ser129 and Lys144 together coordinate ATP. Residues 149–151 (EPY) form an important for substrate binding region. The interval 157–170 (KWTKYVHKVCCPCC) is important for interaction with membranes. Residues 253–256 (QLFV) and 267–268 (RR) contribute to the ATP site. The important for interaction with membranes stretch occupies residues 260 to 268 (KEAEYWLRR). The catalytic loop stretch occupies residues 297–305 (RNTDRGNDN). Positions 338–358 (AIDNGLAFPFKHPDEWRAYPF) are activation loop. Residue Asp340 coordinates ATP. The segment at 353–362 (WRAYPFHWAW) is important for interaction with membranes.

It belongs to the PI3/PI4-kinase family. Type II PI4K subfamily.

It localises to the cytoplasm. The protein resides in the cytosol. It is found in the golgi apparatus membrane. The protein localises to the endoplasmic reticulum membrane. Its subcellular location is the cell membrane. It localises to the early endosome membrane. The enzyme catalyses a 1,2-diacyl-sn-glycero-3-phospho-(1D-myo-inositol) + ATP = a 1,2-diacyl-sn-glycero-3-phospho-(1D-myo-inositol 4-phosphate) + ADP + H(+). Functionally, together with PI4K2A and the type III PI4Ks (PIK4CA and PIK4CB) it contributes to the overall PI4-kinase activity of the cell. This contribution may be especially significant in plasma membrane, endosomal and Golgi compartments. The phosphorylation of phosphatidylinositol (PI) to PI4P is the first committed step in the generation of phosphatidylinositol 4,5-bisphosphate (PIP2), a precursor of the second messenger inositol 1,4,5-trisphosphate (InsP3). Contributes to the production of InsP3 in stimulated cells and is likely to be involved in the regulation of vesicular trafficking. The protein is Phosphatidylinositol 4-kinase type 2-beta (Pi4k2b) of Rattus norvegicus (Rat).